Reading from the N-terminus, the 369-residue chain is Glutamate 5-kinase (369 aa).

Lysine 11 contacts ATP. Substrate contacts are provided by serine 51, aspartate 138, and asparagine 150. ATP contacts are provided by residues 170–171 (TD) and 212–218 (TGGMATK). In terms of domain architecture, PUA spans 277 to 355 (KGSIVIDEGA…QDIYAVLGYE (79 aa)).

Belongs to the glutamate 5-kinase family.

Its subcellular location is the cytoplasm. The catalysed reaction is L-glutamate + ATP = L-glutamyl 5-phosphate + ADP. The protein operates within amino-acid biosynthesis; L-proline biosynthesis; L-glutamate 5-semialdehyde from L-glutamate: step 1/2. In terms of biological role, catalyzes the transfer of a phosphate group to glutamate to form L-glutamate 5-phosphate. This is Glutamate 5-kinase from Aliivibrio fischeri (strain ATCC 700601 / ES114) (Vibrio fischeri).